Here is a 306-residue protein sequence, read N- to C-terminus: IN2-2 protein (306 aa).

Tyrosine 64 (proton donor) is an active-site residue. A substrate-binding site is contributed by histidine 131. 210–220 (SPLGRGFFSSG) serves as a coordination point for NADP(+). A disordered region spans residues 272–306 (LGSPPRKRRLPHTWHNKNRQLQPERGGTVCEAYTG). Positions 276–289 (PRKRRLPHTWHNKN) are enriched in basic residues.

It belongs to the aldo/keto reductase family. Aldo/keto reductase 2 subfamily. As to expression, leaves and roots.

The polypeptide is IN2-2 protein (IN2-2) (Zea mays (Maize)).